Reading from the N-terminus, the 836-residue chain is Enhancer of polycomb homolog 1 (836 aa).

Residue K319 forms a Glycyl lysine isopeptide (Lys-Gly) (interchain with G-Cter in SUMO2) linkage. 2 disordered regions span residues 335–360 and 372–401; these read KRKY…SPAA and YDFP…PDGP. Residues 346–360 are compositionally biased toward low complexity; sequence PSSAAATPQQTSPAA. Phosphoserine is present on S539. K673 is covalently cross-linked (Glycyl lysine isopeptide (Lys-Gly) (interchain with G-Cter in SUMO2)). Residues 802-829 are disordered; it reads VPSSSSVDSVPRENHESEKPALNNIADN. Residues 811–820 show a composition bias toward basic and acidic residues; that stretch reads VPRENHESEK.

The protein belongs to the enhancer of polycomb family. In terms of assembly, component of the NuA4 histone acetyltransferase complex which contains the catalytic subunit KAT5/TIP60 and the subunits EP400, TRRAP/PAF400, BRD8/SMAP, EPC1, DMAP1/DNMAP1, RUVBL1/TIP49, RUVBL2, ING3, actin, ACTL6A/BAF53A, MORF4L1/MRG15, MORF4L2/MRGX, MRGBP, YEATS4/GAS41, VPS72/YL1 and MEAF6. KAT5/TIP60, EPC1, and ING3 together constitute a minimal HAT complex termed Piccolo NuA4. Component of a NuA4-related complex which contains EP400, TRRAP/PAF400, SRCAP, BRD8/SMAP, EPC1, DMAP1/DNMAP1, RUVBL1/TIP49, RUVBL2, actin, ACTL6A/BAF53A, VPS72 and YEATS4/GAS41. Interacts with TRIM27. Interacts with MBTD1; interaction is direct and promotes recruitment of MBTD1 into the NuA4 histone acetyltransferase complex.

The protein localises to the nucleus. It localises to the cytoplasm. In terms of biological role, component of the NuA4 histone acetyltransferase (HAT) complex, a multiprotein complex involved in transcriptional activation of select genes principally by acetylation of nucleosomal histones H4 and H2A. The NuA4 complex plays a direct role in repair of DNA double-strand breaks (DSBs) by promoting homologous recombination (HR). The NuA4 complex is also required for spermatid development by promoting acetylation of histones: histone acetylation is required for histone replacement during the transition from round to elongating spermatids. In the NuA4 complex, EPC1 is required to recruit MBTD1 into the complex. The protein is Enhancer of polycomb homolog 1 of Homo sapiens (Human).